Reading from the N-terminus, the 257-residue chain is tRNA (guanine-N(1)-)-methyltransferase (257 aa).

Residues glycine 117 and 137–142 (LGDFVL) each bind S-adenosyl-L-methionine.

It belongs to the RNA methyltransferase TrmD family. In terms of assembly, homodimer.

It localises to the cytoplasm. It carries out the reaction guanosine(37) in tRNA + S-adenosyl-L-methionine = N(1)-methylguanosine(37) in tRNA + S-adenosyl-L-homocysteine + H(+). Specifically methylates guanosine-37 in various tRNAs. The sequence is that of tRNA (guanine-N(1)-)-methyltransferase from Bordetella parapertussis (strain 12822 / ATCC BAA-587 / NCTC 13253).